The following is a 77-amino-acid chain: Cell division topological specificity factor (77 aa).

The protein belongs to the MinE family.

Prevents the cell division inhibition by proteins MinC and MinD at internal division sites while permitting inhibition at polar sites. This ensures cell division at the proper site by restricting the formation of a division septum at the midpoint of the long axis of the cell. The polypeptide is Cell division topological specificity factor (Helicobacter pylori (strain Shi470)).